The primary structure comprises 390 residues: Chorismate synthase (390 aa).

The NADP(+) site is built by R48 and R54. Residues 125-127 (RSS), 238-239 (NA), G278, 293-297 (KPTSS), and R319 contribute to the FMN site. A disordered region spans residues 359–390 (PRIPGSTTNQIHPVEMQASAPRAEDPEPDESS).

The protein belongs to the chorismate synthase family. Homotetramer. It depends on FMNH2 as a cofactor.

The enzyme catalyses 5-O-(1-carboxyvinyl)-3-phosphoshikimate = chorismate + phosphate. Its pathway is metabolic intermediate biosynthesis; chorismate biosynthesis; chorismate from D-erythrose 4-phosphate and phosphoenolpyruvate: step 7/7. Its function is as follows. Catalyzes the anti-1,4-elimination of the C-3 phosphate and the C-6 proR hydrogen from 5-enolpyruvylshikimate-3-phosphate (EPSP) to yield chorismate, which is the branch point compound that serves as the starting substrate for the three terminal pathways of aromatic amino acid biosynthesis. This reaction introduces a second double bond into the aromatic ring system. In Nitrosomonas europaea (strain ATCC 19718 / CIP 103999 / KCTC 2705 / NBRC 14298), this protein is Chorismate synthase.